Consider the following 416-residue polypeptide: Na(+)/H(+) antiporter NhaA (416 aa).

Helical transmembrane passes span 39–59 (GIVL…PWAA), 82–102 (LHFW…GLEI), 119–139 (LPVL…LALV), 146–166 (GWAV…ALLG), 175–195 (VFLL…IALF), 198–218 (GGLQ…VLLL), 234–254 (AVLW…GVVL), 281–301 (PWVT…VALG), 315–335 (LLMA…VLLA), 353–373 (WGGL…AIFI), and 390–410 (GVLL…WWLQ).

Belongs to the NhaA Na(+)/H(+) (TC 2.A.33) antiporter family.

The protein localises to the cell inner membrane. It catalyses the reaction Na(+)(in) + 2 H(+)(out) = Na(+)(out) + 2 H(+)(in). Its function is as follows. Na(+)/H(+) antiporter that extrudes sodium in exchange for external protons. This Acidovorax sp. (strain JS42) protein is Na(+)/H(+) antiporter NhaA.